Consider the following 282-residue polypeptide: Bis(5'-nucleosyl)-tetraphosphatase, symmetrical (282 aa).

Belongs to the Ap4A hydrolase family.

The catalysed reaction is P(1),P(4)-bis(5'-adenosyl) tetraphosphate + H2O = 2 ADP + 2 H(+). Functionally, hydrolyzes diadenosine 5',5'''-P1,P4-tetraphosphate to yield ADP. The sequence is that of Bis(5'-nucleosyl)-tetraphosphatase, symmetrical from Escherichia coli O45:K1 (strain S88 / ExPEC).